We begin with the raw amino-acid sequence, 515 residues long: Fc receptor-like protein 4 (515 aa).

The N-terminal stretch at 1 to 19 (MLLWASLLAFAPVCGQSAA) is a signal peptide. At 20–387 (AHKPVISVHP…RETPGNRDGL (368 aa)) the chain is on the extracellular side. Ig-like C2-type domains follow at residues 23-97 (PVIS…NPVR), 102-183 (SDSL…NFKI), 193-271 (PELK…GNIH), and 275-374 (PSLQ…MVLN). 4 disulfides stabilise this stretch: Cys-44–Cys-85, Cys-123–Cys-167, Cys-212–Cys-261, and Cys-310–Cys-359. The N-linked (GlcNAc...) asparagine glycan is linked to Asn-374. The chain crosses the membrane as a helical span at residues 388 to 408 (VAAGATGGLLSALLLAVALLF). The Cytoplasmic portion of the chain corresponds to 409–515 (HCWRRRKSGV…GKISSKDEES (107 aa)). 3 short sequence motifs (ITIM motif) span residues 449 to 454 (SLYVDV), 461 to 466 (LVYSEI), and 491 to 496 (VVYSEV). The disordered stretch occupies residues 494–515 (SEVKTQHPDNSAGKISSKDEES).

As to quaternary structure, interacts with PTPN6 and PTPN11. Phosphorylated on cytoplasmic tyrosines upon activation. Specifically expressed by memory and monocytoid B-cells which populate spleen and lymph nodes. Preferentially expressed in memory B-cells associated with mucosal tissue (at protein level).

Its subcellular location is the cell membrane. Functionally, may function as an inhibitor of the B-cell receptor signaling. May function in the B-cell-mediated immune response. The chain is Fc receptor-like protein 4 (FCRL4) from Homo sapiens (Human).